Reading from the N-terminus, the 419-residue chain is Probable pectate lyase C (419 aa).

An N-terminal signal peptide occupies residues 1–19 (MRLGIALFSLIGLCHSVSA). Residues Asn-48, Asn-164, and Asn-201 are each glycosylated (N-linked (GlcNAc...) asparagine). Residue Arg-204 is part of the active site. Residues 261-296 (NEYFHGYVETNYYDPDRDGTLNGNELGVSASNYGGM) enclose the EF-hand domain. Asp-274, Asp-276, Asp-278, Thr-280, and Glu-285 together coordinate Ca(2+). The segment at 350 to 395 (ELISDEASMGGPGDLDGGSPPTDSDGDGIPDDAETEIGSDPNTADS) is disordered. A compositionally biased stretch (acidic residues) spans 373-386 (SDGDGIPDDAETEI).

The protein belongs to the polysaccharide lyase 1 family. Ca(2+) serves as cofactor.

It is found in the secreted. It carries out the reaction Eliminative cleavage of (1-&gt;4)-alpha-D-galacturonan to give oligosaccharides with 4-deoxy-alpha-D-galact-4-enuronosyl groups at their non-reducing ends.. Its function is as follows. Pectinolytic enzyme consist of four classes of enzymes: pectin lyase, polygalacturonase, pectin methylesterase and rhamnogalacturonase. Among pectinolytic enzymes, pectin lyase is the most important in depolymerization of pectin, since it cleaves internal glycosidic bonds of highly methylated pectins. Favors pectate, the anion, over pectin, the methyl ester. The sequence is that of Probable pectate lyase C (plyC) from Aspergillus terreus (strain NIH 2624 / FGSC A1156).